We begin with the raw amino-acid sequence, 83 residues long: Small ribosomal subunit protein bS20 (83 aa).

Belongs to the bacterial ribosomal protein bS20 family.

Functionally, binds directly to 16S ribosomal RNA. This chain is Small ribosomal subunit protein bS20, found in Leuconostoc citreum (strain KM20).